The sequence spans 452 residues: Scaffold protein ILK (452 aa).

Met1 carries the N-acetylmethionine modification. ANK repeat units follow at residues 2-30 (DDIF…LNQG), 31-63 (DDHG…INVM), 64-96 (NRGD…INAV), 97-129 (NEHG…VSIC), and 130-174 (NKYG…GTTR). The segment at 33–139 (HGFSPLHWAC…NKYGEMPVDK (107 aa)) is interaction with LIMS1. A Phosphothreonine; by PAK1 modification is found at Thr173. Residues 180 to 212 (GTLNKHSGIDFKQLNFLTKLNENHSGELWKGRW) form a PH-like; mediates interaction with TGFB1I1 region. Ser186 bears the Phosphoserine mark. A Protein kinase domain is found at 193-446 (LNFLTKLNEN…PKFDMIVPIL (254 aa)). Residues Asn200, Asn202, His203, Ser204, and Lys220 each coordinate ATP. Ser246 bears the Phosphoserine; by PAK1 mark. ATP contacts are provided by His270, Met272, and Asn279. Asp339 provides a ligand contact to Mg(2+). Lys341 provides a ligand contact to ATP. Positions 363 to 371 (KKPEDTNRR) match the Nuclear localization signal motif. The residue at position 426 (Lys426) is an N6-acetyllysine.

It belongs to the protein kinase superfamily. TKL Ser/Thr protein kinase family. Component of the heterotrimeric IPP (ILK-PINCH-PARVIN) complex composed of ILK, LIMS1/PINCH and PARVA; the complex binds to F-actin via the C-terminal tail of LIMS1 and the N-terminal region of PARVA, promoting F-actin filament bundling. Formation of the IPP complex is dependent on protein kinase C and precedes integrin-mediated cell adhesion and spreading. ILK also interacts with LIMS2/PINCH2 and with PARVB and PARVG which may substitute for LIMS1 and PARVA in the IPP complex; PARVA and PARVB compete for the same binding site. Interaction with PARVG promotes the establishment of cell polarity required for leukocyte migration. Interacts with the cytoplasmic domain of integrin ITGB1 and may also interact with integrins ITGB2, ITGB3 and/or ITGB5. Interacts probably also with TGFB1I1. Interacts (via ANK repeats) with EPHA1 (via SAM domain); stimulated by EFNA1 but independent of the kinase activity of EPHA1. Interacts with FERMT2. Interacts with LIMD2; leading to activate the protein kinase activity. Interacts with PXN/PAXILLIN (via LD motif 4). Interacts with CCDC25 (via cytoplasmic region); initiating the ILK-PARVB cascade to induce cytoskeleton rearrangement and directional migration of cells. Interacts with IQGAP1; the interaction is required for localization of IQGAP1 to the cell cortex. Post-translationally, phosphorylation by PAK1 modulates ILK subcellular location by promoting its nuclear export. As to expression, highly expressed in heart followed by skeletal muscle, pancreas and kidney. Weakly expressed in placenta, lung and liver.

The protein localises to the cell junction. It is found in the focal adhesion. The protein resides in the cell membrane. Its subcellular location is the cell projection. It localises to the lamellipodium. The protein localises to the cytoplasm. It is found in the myofibril. The protein resides in the sarcomere. Its subcellular location is the nucleus. It localises to the cytoskeleton. The protein localises to the microtubule organizing center. It is found in the centrosome. The protein resides in the cell cortex. Functionally, scaffold protein which mediates protein-protein interactions during a range of cellular events including focal adhesion assembly, cell adhesion and cell migration. Regulates integrin-mediated signal transduction by contributing to inside-out integrin activation. Recruits PARVA and LIMS1/PITCH to form the heterotrimeric IPP (ILK-PINCH-PARVIN) complex which binds to F-actin via the C-terminal tail of LIMS1 and the N-terminal region of PARVA, promoting F-actin filament bundling, a process required to generate force for actin cytoskeleton reorganization and subsequent dynamic cell adhesion events such as cell spreading and migration. Binding to PARVA promotes effective assembly of ILK into focal adhesions while PARVA-bound ILK can simultaneously engage integrin-beta cytoplasmic tails to mediate cell adhesion. Plays a role with PARVG in promoting the cell adhesion and spreading of leukocytes. Acts as an upstream effector of both AKT1/PKB and GSK3. Mediates trafficking of caveolae to the cell surface in an ITGB1-dependent manner by promoting the recruitment of IQGAP1 to the cell cortex which cooperates with its effector DIAPH1 to locally stabilize microtubules and allow stable insertion of caveolae into the plasma membrane. Required for the maintenance of mitotic spindle integrity by promoting phosphorylation of TACC3 by AURKA. Associates with chromatin and may act as a negative regulator of transcription when located in the nucleus. This chain is Scaffold protein ILK, found in Homo sapiens (Human).